The primary structure comprises 270 residues: 3-phenylpropionate-dihydrodiol/cinnamic acid-dihydrodiol dehydrogenase (270 aa).

Residue 10 to 34 coordinates NAD(+); the sequence is FITGGGSGLGLALVERFIEEGAQVA. Ser-143 contributes to the substrate binding site. The active-site Proton acceptor is Tyr-156.

This sequence belongs to the short-chain dehydrogenases/reductases (SDR) family.

It carries out the reaction 3-(cis-5,6-dihydroxycyclohexa-1,3-dien-1-yl)propanoate + NAD(+) = 3-(2,3-dihydroxyphenyl)propanoate + NADH + H(+). The enzyme catalyses (2E)-3-(cis-5,6-dihydroxycyclohexa-1,3-dien-1-yl)prop-2-enoate + NAD(+) = (2E)-3-(2,3-dihydroxyphenyl)prop-2-enoate + NADH + H(+). It participates in aromatic compound metabolism; 3-phenylpropanoate degradation. Its function is as follows. Converts 3-phenylpropionate-dihydrodiol (PP-dihydrodiol) and cinnamic acid-dihydrodiol (CI-dihydrodiol) into 3-(2,3-dihydroxylphenyl)propanoic acid (DHPP) and 2,3-dihydroxicinnamic acid (DHCI), respectively. This Escherichia coli (strain K12 / MC4100 / BW2952) protein is 3-phenylpropionate-dihydrodiol/cinnamic acid-dihydrodiol dehydrogenase.